The following is a 215-amino-acid chain: Peptide methionine sulfoxide reductase MsrA (215 aa).

The active site involves C58.

The protein belongs to the MsrA Met sulfoxide reductase family.

It carries out the reaction L-methionyl-[protein] + [thioredoxin]-disulfide + H2O = L-methionyl-(S)-S-oxide-[protein] + [thioredoxin]-dithiol. The enzyme catalyses [thioredoxin]-disulfide + L-methionine + H2O = L-methionine (S)-S-oxide + [thioredoxin]-dithiol. Functionally, has an important function as a repair enzyme for proteins that have been inactivated by oxidation. Catalyzes the reversible oxidation-reduction of methionine sulfoxide in proteins to methionine. In Pseudomonas syringae pv. tomato (strain ATCC BAA-871 / DC3000), this protein is Peptide methionine sulfoxide reductase MsrA.